A 991-amino-acid polypeptide reads, in one-letter code: Ribonuclease TUDOR 1 (991 aa).

Ala-2 bears the N-acetylalanine mark. TNase-like domains lie at 8-151 (QWLK…RWSK), 186-364 (KPME…MWAN), 378-557 (QNFT…IHSA), and 587-714 (RRIP…IWEN). Residues 227–250 (RTTNGSVVETVPDEPNGDVSAESR) are disordered. A Tudor domain is found at 782–847 (NPKRGDIVLA…RPIDPSVSAA (66 aa)). Phosphotyrosine is present on Tyr-970. The disordered stretch occupies residues 971–991 (GDIESDDEDTGPARKPAGGRR). Ser-975 bears the Phosphoserine mark. At Thr-980 the chain carries Phosphothreonine.

Expressed in seeds, leaves, flowers, roots and siliques (at protein level). Accumulates in the cap and elongation zone of the root apices (at protein level).

The protein localises to the cytoplasm. Its subcellular location is the cytoplasmic granule. It is found in the perinuclear region. The protein resides in the endoplasmic reticulum. With respect to regulation, repressed by the specific inhibitor 3',5'-deoxythymidine bisphosphate (pdTp); this RNase activity inhibition impairs subcellular relocation upon abiotic stress and leads to reduced stress resistance. Functionally, cytoprotective ribonuclease (RNase) required for resistance to abiotic stresses, acting as a positive regulator of mRNA decapping during stress. Essential for the integrity and function of cytoplasmic messenger ribonucleoprotein (mRNP) complexes called stress granules (SGs) and processing bodies (PBs), sites of post-transcriptional gene regulation during stress (e.g. salt and heat). Involved in gibberellic acid (GA) biosynthesis. Essential for stress tolerance, probably by regulating mRNAs entering the secretory pathway. Component of stress granules (SGs) that regulates growth under salt stress by modulating levels of GA20OX3 mRNA. Binds GA20OX3 mRNA. May inhibit the degradation of mRNAs involved in stress adaptation. The polypeptide is Ribonuclease TUDOR 1 (Arabidopsis thaliana (Mouse-ear cress)).